Here is a 126-residue protein sequence, read N- to C-terminus: Small ribosomal subunit protein uS11 (126 aa).

It belongs to the universal ribosomal protein uS11 family. In terms of assembly, part of the 30S ribosomal subunit. Interacts with proteins S7 and S18. Binds to IF-3.

Functionally, located on the platform of the 30S subunit, it bridges several disparate RNA helices of the 16S rRNA. Forms part of the Shine-Dalgarno cleft in the 70S ribosome. In Desulfotalea psychrophila (strain LSv54 / DSM 12343), this protein is Small ribosomal subunit protein uS11.